The primary structure comprises 557 residues: Aerobic glycerol-3-phosphate dehydrogenase (557 aa).

21-49 (DLVIIGGGITGAGIALDASERGMKVALVE) lines the FAD pocket.

This sequence belongs to the FAD-dependent glycerol-3-phosphate dehydrogenase family. The cofactor is FAD.

The protein resides in the cytoplasm. It catalyses the reaction a quinone + sn-glycerol 3-phosphate = dihydroxyacetone phosphate + a quinol. The protein operates within polyol metabolism; glycerol degradation via glycerol kinase pathway; glycerone phosphate from sn-glycerol 3-phosphate (aerobic route): step 1/1. The polypeptide is Aerobic glycerol-3-phosphate dehydrogenase (glpD) (Staphylococcus aureus (strain bovine RF122 / ET3-1)).